Reading from the N-terminus, the 421-residue chain is UDP-N-acetylglucosamine 1-carboxyvinyltransferase (421 aa).

22–23 (KN) lines the phosphoenolpyruvate pocket. Arginine 92 provides a ligand contact to UDP-N-acetyl-alpha-D-glucosamine. Cysteine 116 serves as the catalytic Proton donor. Cysteine 116 is modified (2-(S-cysteinyl)pyruvic acid O-phosphothioketal). Residues 121–125 (RPVDQ), aspartate 308, and isoleucine 330 each bind UDP-N-acetyl-alpha-D-glucosamine.

This sequence belongs to the EPSP synthase family. MurA subfamily.

It localises to the cytoplasm. It carries out the reaction phosphoenolpyruvate + UDP-N-acetyl-alpha-D-glucosamine = UDP-N-acetyl-3-O-(1-carboxyvinyl)-alpha-D-glucosamine + phosphate. The protein operates within cell wall biogenesis; peptidoglycan biosynthesis. Its function is as follows. Cell wall formation. Adds enolpyruvyl to UDP-N-acetylglucosamine. The protein is UDP-N-acetylglucosamine 1-carboxyvinyltransferase of Ralstonia nicotianae (strain ATCC BAA-1114 / GMI1000) (Ralstonia solanacearum).